Here is a 1218-residue protein sequence, read N- to C-terminus: MLTKFETKSNRVKGLSFHPRRPWILASLHSGVIQMWDYRMGTLLDRFDEHDGPVRGVHFHATQPLFVSGGDDYKIKVWNYKTHRCLFTLHGHLDYIRTVQFHHEYPWIVSASDDQTIRIWNWQSRTCVAVLTGHNHYVMCASFHPKEDLVVSASLDQTVRVWDIGALRKKTVSPADDILRLTQMNTDLFGGVDAVVKYVLEGHDRGVNWASFHPTLPLIVSGADDRQVKLWRMNDTKAWEVDTLRGHMNNVSCVMFHAKQDIIVSNSEDKSIRIWDATKRTGIQTFRREHDRFWILSAHPEMNLLAAGHDSGMIVFKLERERPAFSVSGDTVFYVKDRFLRFFEFTTQKEVQLAPIRRPGSVSLNQSPKTLSYSPTENAVLICSDVDGGSYELYIVPKDSAGRADYLQDAKKGAGGSAVFVARNRFAVLEKSSNQVLVKNLKNEIVKKSPLPIATDAIYYAGTGNLLCKAEDRVTIFDLQQRLILGELQAPSVKYVVWSSDMESVALLSKHAVVIANKKLVHRCTLHETIRVKSGAWDENGVFIYTTLNHIKYCLPNGDSGIIKTLDVPIYITRVIGNNIFCLDRDGKNKLVTVDASEYIFKLALLRKRYDHVMSMIKNSQLCGQAVISYLQQKGFPEVALHFVKDEKTRFNLALESGNIQIAVASAKEIDDKDHWYRLGIEALRQGNVGIVEYAYQRTKNFERLAFLYLITGYMDKVGFMCKIAGQNNNLMGQFHNALYLGDALKRVEILENAGQLPLAYITATTHGLTEIADRLAAELGENIPSLPEGKARSLLIPPAPLTASGDWPLLRVMHGIFEGGLDATGKAELEEDDEAAGADWGDEDLDMVDASEAMANGGDGFDAEEGEANEEDGEEGGWDLEDLELPPEAETPKNAGNARSAVFVAPPPGMPVSLIWTQKSSLAGEHAAAGNFDTAMRLLSRQLGIKNFAPLKPLFVDLHMGSHSYLRALATAPIIPIAVEKGWSESASPNVRGPPALVFTFPQMEDRLKAAYKATTDGKFPEALRQFLSILHTIPLIVVDSRREVDEVKELIEIVREYVLGLRMELKRKELRDDVNRQQELAAYFTNCKLQRVHMRLVLGSAMGLCYKQKNFATAEHFARMLLENNPNEAQARRARQVQQQCSGKKDSSELNYDYRNPFVVCGATYVPIYRGQKDVSCPYCGSRFVPSIEGQLCTICELAVVGADASGLLCSPTQSR.

WD repeat units lie at residues 7 to 48 (TKSN…DRFD), 49 to 88 (EHDG…CLFT), 91 to 132 (GHLD…AVLT), 133 to 172 (GHNH…KKTV), 202 to 241 (GHDR…AWEV), 246 to 285 (GHMN…GIQT), 288 to 326 (REHD…PAFS), 363 to 404 (SLNQ…AGRA), and 450 to 489 (PLPI…GELQ). A disordered region spans residues 857-882 (NGGDGFDAEEGEANEEDGEEGGWDLE). Residues 862–882 (FDAEEGEANEEDGEEGGWDLE) show a composition bias toward acidic residues.

As to quaternary structure, oligomeric complex that consists of at least the alpha, beta, beta', gamma, delta, epsilon and zeta subunits.

It localises to the cytoplasm. The protein localises to the golgi apparatus membrane. The protein resides in the cytoplasmic vesicle. It is found in the COPI-coated vesicle membrane. The coatomer is a cytosolic protein complex that binds to dilysine motifs and reversibly associates with Golgi non-clathrin-coated vesicles, which further mediate biosynthetic protein transport from the ER, via the Golgi up to the trans Golgi network. Coatomer complex is required for budding from Golgi membranes, and is essential for the retrograde Golgi-to-ER transport of dilysine-tagged proteins. The polypeptide is Coatomer subunit alpha-1 (Oryza sativa subsp. japonica (Rice)).